We begin with the raw amino-acid sequence, 489 residues long: Betaine aldehyde dehydrogenase (489 aa).

Positions 26 and 93 each coordinate K(+). NAD(+) is bound at residue 150–152; it reads GAW. Lys-162 functions as the Charge relay system in the catalytic mechanism. 176–179 provides a ligand contact to NAD(+); it reads KPSE. Residue Val-180 participates in K(+) binding. 229-232 serves as a coordination point for NAD(+); it reads GVET. Leu-245 contacts K(+). The Proton acceptor role is filled by Glu-251. 3 residues coordinate NAD(+): Gly-253, Cys-285, and Glu-386. The Nucleophile role is filled by Cys-285. Cys-285 bears the Cysteine sulfenic acid (-SOH) mark. The K(+) site is built by Lys-456 and Gly-459. Glu-463 serves as the catalytic Charge relay system.

It belongs to the aldehyde dehydrogenase family. In terms of assembly, dimer of dimers. K(+) is required as a cofactor.

The catalysed reaction is betaine aldehyde + NAD(+) + H2O = glycine betaine + NADH + 2 H(+). Its pathway is amine and polyamine biosynthesis; betaine biosynthesis via choline pathway; betaine from betaine aldehyde: step 1/1. Involved in the biosynthesis of the osmoprotectant glycine betaine. Catalyzes the irreversible oxidation of betaine aldehyde to the corresponding acid. This Burkholderia orbicola (strain MC0-3) protein is Betaine aldehyde dehydrogenase.